Reading from the N-terminus, the 1264-residue chain is Box A-binding factor (1264 aa).

Residues 1–11 show a composition bias toward basic and acidic residues; sequence MTKTTKPKEKA. Disordered stretches follow at residues 1–25, 161–200, 234–253, 405–463, 523–585, and 599–627; these read MTKTTKPKEKAAAGGAVIGSGSGLG, TASDTAATSEAAIDDDPSAINTNNNNNNSKAQNDASESVK, LISHHQQEQHQQAQQQQHQQ, QLHQ…HALS, NQTQ…SAAT, and HNSSLEDGYGSPRSSHSGGGGGGTLPAFQ. Residues 16–25 show a composition bias toward gly residues; sequence AVIGSGSGLG. Residues 161 to 171 are compositionally biased toward low complexity; sequence TASDTAATSEA. A compositionally biased stretch (polar residues) spans 189–198; sequence SKAQNDASES. Basic residues predominate over residues 409–421; it reads QQHHHQQQLHHHQ. Composition is skewed to low complexity over residues 422-438, 447-459, and 523-554; these read QQQQQLYHQQQQQQQQQ, STSSAGGDSPSSS, and NQTQAHLQQQHHQQQQQQHQQHQQQQLQQQQQ. Residues 555–564 show a composition bias toward basic residues; that stretch reads QHHHNQHQHH. Composition is skewed to low complexity over residues 565-585 and 599-614; these read NSSSSSPGPAGLHHSSSSAAT and HNSSLEDGYGSPRSSH. The segment at 803 to 827 adopts a GATA-type zinc-finger fold; it reads CSNCHTTHTSLWRRNPAGEPVCNAC. Disordered stretches follow at residues 841–867, 899–1048, and 1181–1202; these read TMKKDTIQKRKRKPKGTKSEKSKSKSK, DDMK…SNEN, and EEMDQSQQQQQQQQHQQQQHGE. 2 stretches are compositionally biased toward low complexity: residues 909–950 and 985–1007; these read PYNS…GSTS and QMSPLNMQQHQQQQSCSMQHSPS. Residues 1008-1023 are compositionally biased toward polar residues; sequence TPTSIFNTPSPTHQLH. Low complexity-rich tracts occupy residues 1024–1048 and 1185–1200; these read NNNNNNNNSSIFNNNNNNNSSSNEN and QSQQQQQQQQHQQQQH. Ser1208 and Ser1210 each carry phosphoserine.

Interacts (via GATA-type Zn-finger domain) with Bfc; this interaction enhances srp binding to the promoter of crq/croquemort.

Its subcellular location is the nucleus. In terms of biological role, may function as a transcriptional activator protein and may play a key role in the organogenesis of the fat body. Binds a sequence element (5'-[TA]GATAA-3') found in the larval promoters of all known alcohol dehydrogenase (ADH) genes. Acts as a homeotic gene downstream of the terminal gap gene HKB to promote morphogenesis and differentiation of anterior and posterior midgut. Together with transcriptional cofactor Bfc directly binds the promoter of phagocytic receptor crq/croquemort to upregulate its expression and stimulate efferocytosis in response to apoptotic cells, including during embryogenesis. This chain is Box A-binding factor (srp), found in Drosophila melanogaster (Fruit fly).